Consider the following 262-residue polypeptide: Indole-3-glycerol phosphate synthase (262 aa).

It belongs to the TrpC family.

The enzyme catalyses 1-(2-carboxyphenylamino)-1-deoxy-D-ribulose 5-phosphate + H(+) = (1S,2R)-1-C-(indol-3-yl)glycerol 3-phosphate + CO2 + H2O. It participates in amino-acid biosynthesis; L-tryptophan biosynthesis; L-tryptophan from chorismate: step 4/5. In Clostridium kluyveri (strain NBRC 12016), this protein is Indole-3-glycerol phosphate synthase.